Consider the following 214-residue polypeptide: Octanoyltransferase (214 aa).

A BPL/LPL catalytic domain is found at 36–214; it reads GRESEMVWLL…QQKFDTIFLQ (179 aa). Substrate is bound by residues 75 to 82, 147 to 149, and 160 to 162; these read RGGKYSYH, AFG, and GFS. C178 serves as the catalytic Acyl-thioester intermediate.

This sequence belongs to the LipB family.

Its subcellular location is the cytoplasm. The catalysed reaction is octanoyl-[ACP] + L-lysyl-[protein] = N(6)-octanoyl-L-lysyl-[protein] + holo-[ACP] + H(+). It functions in the pathway protein modification; protein lipoylation via endogenous pathway; protein N(6)-(lipoyl)lysine from octanoyl-[acyl-carrier-protein]: step 1/2. Functionally, catalyzes the transfer of endogenously produced octanoic acid from octanoyl-acyl-carrier-protein onto the lipoyl domains of lipoate-dependent enzymes. Lipoyl-ACP can also act as a substrate although octanoyl-ACP is likely to be the physiological substrate. The sequence is that of Octanoyltransferase from Anaplasma marginale (strain Florida).